The following is a 413-amino-acid chain: L-methionine gamma-lyase (413 aa).

Residues 75–77 and 105–106 each bind pyridoxal 5'-phosphate; these read YGR and GM. Tyr-131 is a binding site for substrate. A pyridoxal 5'-phosphate-binding site is contributed by 218-220; that stretch reads SAT. Residue Lys-221 is modified to N6-(pyridoxal phosphate)lysine. Residue Arg-365 participates in substrate binding. The tract at residues 388 to 413 is disordered; it reads RLPETAGAGREPSRTALRLPERAADR.

It belongs to the trans-sulfuration enzymes family. Homotetramer; dimer of active dimers. Pyridoxal 5'-phosphate is required as a cofactor.

It carries out the reaction L-methionine + H2O = methanethiol + 2-oxobutanoate + NH4(+). The enzyme catalyses L-homocysteine + H2O = 2-oxobutanoate + hydrogen sulfide + NH4(+) + H(+). It catalyses the reaction L-cysteine + H2O = hydrogen sulfide + pyruvate + NH4(+) + H(+). Functionally, catalyzes the alpha,gamma-elimination of L-methionine to produce methanethiol, 2-oxobutanoate and ammonia. Is probably involved in L-methionine catabolism. Is also able to catalyze the alpha,gamma-elimination of L-homocysteine, and, to a lesser extent, the alpha,beta-elimination of L-cysteine. The chain is L-methionine gamma-lyase from Streptomyces avermitilis (strain ATCC 31267 / DSM 46492 / JCM 5070 / NBRC 14893 / NCIMB 12804 / NRRL 8165 / MA-4680).